The chain runs to 361 residues: Divinyl chlorophyll a/b light-harvesting protein PcbD (361 aa).

The next 6 helical transmembrane spans lie at 27-47 (FIASHVGHTGLICFAAGGSTL), 93-113 (IVHLILSMVYGGGGLLHGILF), 140-160 (FILGHHLIFMGVACAWFVEWA), 201-221 (VMGGHAFLAFAEITGGAFHIV), 248-268 (AVLSWSLAGIGWMAIVAAFWC), and 315-335 (LTNVHYYLGFFFLQGHFWHAL).

This sequence belongs to the PsbB/PsbC family. IsiA/Pcb subfamily. In terms of assembly, the antenna complex consists of divinyl chlorophylls (a and b) and divinyl chlorophyll a/b binding proteins and binds more divinyl chlorophyll b than does the antenna complex from high-light-adapted Prochlorococcus. Requires divinyl chlorophyll a as cofactor. Divinyl chlorophyll b is required as a cofactor.

Its subcellular location is the cellular thylakoid membrane. In terms of biological role, the antenna complex functions as a light receptor, it captures and delivers excitation energy to photosystems II and I. The Prochlorales pcb genes are not related to higher plant LHCs. This is Divinyl chlorophyll a/b light-harvesting protein PcbD (pcbD) from Prochlorococcus marinus (strain SARG / CCMP1375 / SS120).